The sequence spans 245 residues: Eukaryotic translation initiation factor 6 (245 aa).

Residue tyrosine 113 is modified to Phosphotyrosine. Residue threonine 165 is modified to Phosphothreonine. Serine 166 carries the phosphoserine modification. A phosphoserine; by CK1 mark is found at serine 174 and serine 175. Phosphoserine; by PKC is present on serine 235. Phosphoserine is present on residues serine 239 and serine 243.

The protein belongs to the eIF-6 family. In terms of assembly, monomer. Associates with the 60S ribosomal subunit. Interacts with RACK1. Interacts with DICER1, AGO2, TARBP2, MOV10 and RPL7A; they form a large RNA-induced silencing complex (RISC). Phosphorylation at Ser-174 and Ser-175 by CSNK1D/CK1 promotes nuclear export. Post-translationally, ufmylated by UFL1.

It is found in the cytoplasm. The protein resides in the nucleus. It localises to the nucleolus. Functionally, binds to the 60S ribosomal subunit and prevents its association with the 40S ribosomal subunit to form the 80S initiation complex in the cytoplasm. Behaves as a stimulatory translation initiation factor downstream insulin/growth factors. Is also involved in ribosome biogenesis. Associates with pre-60S subunits in the nucleus and is involved in its nuclear export. Cytoplasmic release of TIF6 from 60S subunits and nuclear relocalization is promoted by a RACK1 (RACK1)-dependent protein kinase C activity. In tissues responsive to insulin, controls fatty acid synthesis and glycolysis by exerting translational control of adipogenic transcription factors such as CEBPB, CEBPD and ATF4 that have G/C rich or uORF in their 5'UTR. Required for ROS-dependent megakaryocyte maturation and platelets formation, controls the expression of mitochondrial respiratory chain genes involved in reactive oxygen species (ROS) synthesis. Involved in miRNA-mediated gene silencing by the RNA-induced silencing complex (RISC). Required for both miRNA-mediated translational repression and miRNA-mediated cleavage of complementary mRNAs by RISC. Modulates cell cycle progression and global translation of pre-B cells, its activation seems to be rate-limiting in tumorigenesis and tumor growth. In Rattus norvegicus (Rat), this protein is Eukaryotic translation initiation factor 6 (Eif6).